The sequence spans 220 residues: Chloramphenicol acetyltransferase (220 aa).

Residue histidine 187 is the Proton acceptor of the active site.

The protein belongs to the chloramphenicol acetyltransferase family. Homotrimer.

The catalysed reaction is chloramphenicol + acetyl-CoA = chloramphenicol 3-acetate + CoA. Its function is as follows. This enzyme is an effector of chloramphenicol resistance in bacteria. In Bacillus pumilus (Bacillus mesentericus), this protein is Chloramphenicol acetyltransferase (cat86).